We begin with the raw amino-acid sequence, 319 residues long: Aspartate carbamoyltransferase catalytic subunit (319 aa).

The carbamoyl phosphate site is built by Arg-65 and Thr-66. Lys-93 serves as a coordination point for L-aspartate. Carbamoyl phosphate contacts are provided by Arg-115, His-143, and Gln-146. The L-aspartate site is built by Arg-176 and Arg-230. Gly-271 and Pro-272 together coordinate carbamoyl phosphate.

The protein belongs to the aspartate/ornithine carbamoyltransferase superfamily. ATCase family. Heterododecamer (2C3:3R2) of six catalytic PyrB chains organized as two trimers (C3), and six regulatory PyrI chains organized as three dimers (R2).

The catalysed reaction is carbamoyl phosphate + L-aspartate = N-carbamoyl-L-aspartate + phosphate + H(+). It functions in the pathway pyrimidine metabolism; UMP biosynthesis via de novo pathway; (S)-dihydroorotate from bicarbonate: step 2/3. In terms of biological role, catalyzes the condensation of carbamoyl phosphate and aspartate to form carbamoyl aspartate and inorganic phosphate, the committed step in the de novo pyrimidine nucleotide biosynthesis pathway. This Chelativorans sp. (strain BNC1) protein is Aspartate carbamoyltransferase catalytic subunit.